The sequence spans 411 residues: 2,3-bisphosphoglycerate-independent phosphoglycerate mutase (411 aa).

Belongs to the BPG-independent phosphoglycerate mutase family. A-PGAM subfamily.

The enzyme catalyses (2R)-2-phosphoglycerate = (2R)-3-phosphoglycerate. It functions in the pathway carbohydrate degradation; glycolysis; pyruvate from D-glyceraldehyde 3-phosphate: step 3/5. Functionally, catalyzes the interconversion of 2-phosphoglycerate and 3-phosphoglycerate. The sequence is that of 2,3-bisphosphoglycerate-independent phosphoglycerate mutase from Pyrobaculum islandicum (strain DSM 4184 / JCM 9189 / GEO3).